We begin with the raw amino-acid sequence, 280 residues long: Intimin (280 aa).

Residues 1–92 (ITEIKADKTT…MLKLLEVEFF (92 aa)) form the Big-1 domain. The region spanning 127-173 (ANGGNGKYTWYSANPAIASVDPSSGQVTLKDKGETTITVVSGDKQTA) is the BIG2 domain. A disulfide bridge connects residues cysteine 201 and cysteine 278.

Belongs to the intimin/invasin family.

It is found in the cell outer membrane. An inverse autotransporter. In Hafnia alvei, this protein is Intimin (eaeA).